The primary structure comprises 456 residues: MIDYKPVVQKKNLKVIEQREESIYYNKKSEDGGCGGDFKCDTASVSGSVSQRACVYCGARVVLNPITDAYHLVHGPIGCASYTWDIRGSLSSGEEIYRNSFSTDLREKDVIFGGEKKLSAAIDEIVAEKHPKVIFVYSTCIVGVIGDDTDAVCKAAEEKYGIRVIPVKSPGFAGSKSTGYKAACDALMKLMGDKTTDEKIDGINFLGDFNLAGEIWIVTNYLKKFGIDVVAKLTGDSSYDEIMNAPKAKLNIVQCAGSMMYLAKMMEKKFGIPYIKVSFYGVEDTKNSLLKIADILGNEEKVKKAKQFVLEEESKIENELDYYRDRLKGKKAAIFVGGAFKAISLIKQFRNLGMETVMVGTQTGKKDDYEIIESITTEGTVILDDANPYELEKFILEQGADILVGGVKERPLAYKLGIAFCDHNHERKHALSGYVGSLNFAKEIDLTINSPVWDYV.

This sequence belongs to the NifD/NifK/NifE/NifN family.

Its pathway is cofactor biosynthesis; Fe-Mo cofactor biosynthesis. Its function is as follows. This protein may play a role in the biosynthesis of the prosthetic group of nitrogenase (FeMo cofactor). This chain is Nitrogenase iron-molybdenum cofactor biosynthesis protein NifE (nifE), found in Clostridium pasteurianum.